A 278-amino-acid chain; its full sequence is Nudix hydrolase 2 (278 aa).

The 133-residue stretch at 110 to 242 folds into the Nudix hydrolase domain; that stretch reads SHRVGIGAFV…ELLRYMTDIC (133 aa). A Nudix box motif is present at residues 147-168; the sequence is GVVNEGEDIHDGSVREVKEETG. Position 162 (E162) interacts with Mg(2+). E165 acts as the Proton acceptor in catalysis. E166 lines the Mg(2+) pocket.

Belongs to the Nudix hydrolase family. Requires Mg(2+) as cofactor. It depends on Mn(2+) as a cofactor. In terms of tissue distribution, expressed in roots, stems and leaves.

It carries out the reaction ADP-D-ribose + H2O = D-ribose 5-phosphate + AMP + 2 H(+). It catalyses the reaction NAD(+) + H2O = beta-nicotinamide D-ribonucleotide + AMP + 2 H(+). The catalysed reaction is NADH + H2O = reduced beta-nicotinamide D-ribonucleotide + AMP + 2 H(+). Its function is as follows. Probably mediates the hydrolysis of some nucleoside diphosphate derivatives. In vitro, it can use both NADH and ADP-ribose as substrates; however the relevance of such substrates in vivo is unclear. Confers tolerance to oxidative stress. The sequence is that of Nudix hydrolase 2 from Arabidopsis thaliana (Mouse-ear cress).